A 481-amino-acid polypeptide reads, in one-letter code: 7-deoxyloganetin glucosyltransferase (481 aa).

The active-site Proton acceptor is the His22. His22 lines the an anthocyanidin pocket. Asp126 serves as the catalytic Charge relay. Residues Thr148, Gln363, His378, Trp381, Asn382, Ser383, and Glu386 each contribute to the UDP-alpha-D-glucose site. Ala401 serves as a coordination point for an anthocyanidin. Residues Glu402 and Gln403 each coordinate UDP-alpha-D-glucose.

The protein belongs to the UDP-glycosyltransferase family. In terms of tissue distribution, ubiquitous. Very low expression in stems.

The enzyme catalyses 7-deoxyloganetin + UDP-alpha-D-glucose = 7-deoxyloganin + UDP + H(+). Its function is as follows. Iridoid glucosyltransferase acting on genipin and 7-deoxyloganetin. No activity with 7-deoxyloganetic acid. Involved in geniposide biosynthesis. The chain is 7-deoxyloganetin glucosyltransferase (UGT85A24) from Gardenia jasminoides (Cape jasmine).